Consider the following 1822-residue polypeptide: Integrin beta-4 (1822 aa).

Positions 1 to 27 (MAGPRPSPWARLLLAALISVSLSGTLA) are cleaved as a signal peptide. Over 28-710 (NRCKKAPVKS…HKKKDCPPGS (683 aa)) the chain is Extracellular. Residues 29-73 (RCKKAPVKSCTECVRVDKDCAYCTDEMFRDRRCNTQAELLAAGCQ) form the PSI domain. Cystine bridges form between Cys-30/Cys-48, Cys-38/Cys-455, Cys-41/Cys-61, Cys-51/Cys-72, Cys-245/Cys-288, Cys-457/Cys-476, Cys-468/Cys-479, and Cys-481/Cys-490. The 199-residue stretch at 131–329 (DLYILMDFSN…IPIFAVTNYS (199 aa)) folds into the VWFA domain. Ser-139 and Ser-141 together coordinate Mg(2+). Residues Ser-141, Asp-144, Asp-145, and Asp-176 each contribute to the Ca(2+) site. Residues 194 to 199 (WPNSDP) are involved in NRG1- and IGF1-binding. The Ca(2+) site is built by Asn-228, Asp-230, Pro-232, and Glu-233. Glu-233 contributes to the Mg(2+) binding site. The N-linked (GlcNAc...) asparagine glycan is linked to Asn-327. Glu-350 provides a ligand contact to Ca(2+). I-EGF domains are found at residues 457–491 (CELQKEVRSARCSFNGDFVCGQCVCSEGWSGQTCN), 492–537 (CSTG…QFCE), 538–574 (YDNFQCPRTSGFLCNDRGRCSMGQCVCEPGWTGPSCD), and 575–615 (CPLS…TICE). A glycan (N-linked (GlcNAc...) asparagine) is linked at Asn-491. 11 disulfides stabilise this stretch: Cys-492–Cys-520, Cys-503–Cys-518, Cys-512–Cys-523, Cys-525–Cys-536, Cys-543–Cys-557, Cys-551–Cys-562, Cys-564–Cys-573, Cys-575–Cys-598, Cys-582–Cys-596, Cys-590–Cys-601, and Cys-603–Cys-614. Asn-579 is a glycosylation site (N-linked (GlcNAc...) asparagine). Residue Asn-617 is glycosylated (N-linked (GlcNAc...) asparagine). 4 disulfides stabilise this stretch: Cys-626/Cys-671, Cys-632/Cys-651, Cys-635/Cys-648, and Cys-680/Cys-706. Asn-695 carries an N-linked (GlcNAc...) asparagine glycan. The chain crosses the membrane as a helical span at residues 711–733 (FWWLIPLLLLLLPLLALLLLLCW). Residues 732-749 (CWKYCACCKACLALLPCC) form a palmitoylated on several cysteines region. The Cytoplasmic segment spans residues 734–1822 (KYCACCKACL…THMDQQFFQT (1089 aa)). A phosphoserine mark is found at Ser-771, Ser-1069, and Ser-1119. Residues 979 to 1084 (VNITIIKEQA…QVRRFHVQLS (106 aa)) form the Calx-beta domain. The interval 1113-1140 (TSQMLSSQPPPHGDLGAPQNPNAKAAGS) is disordered. Fibronectin type-III domains follow at residues 1129 to 1218 (APQN…THQE) and 1222 to 1321 (EPGR…TQPK). The interval 1400–1444 (LSASSGRSSDAEAPHGPPDDGGAGGKGGSLPRSATPGPPGEHLVN) is disordered. The segment covering 1418–1427 (DDGGAGGKGG) has biased composition (gly residues). A phosphoserine mark is found at Ser-1454, Ser-1457, and Ser-1474. Thr-1487 bears the Phosphothreonine mark. A Phosphoserine modification is found at Ser-1494. The disordered stretch occupies residues 1495-1525 (LTRSEHSHSTTLPRDYSTLTSVSSHDSRLTA). The segment covering 1503 to 1518 (STTLPRDYSTLTSVSS) has biased composition (polar residues). Thr-1530 is modified (phosphothreonine). 2 consecutive Fibronectin type-III domains span residues 1530–1625 (TPTR…VHPQ) and 1643–1739 (APGP…SQDG). Ser-1791 bears the Phosphoserine mark.

This sequence belongs to the integrin beta chain family. As to quaternary structure, heterodimer of an alpha and a beta subunit. Beta-4 associates with alpha-6. Interacts (via cytoplasmic region) with COL17A1 (via cytoplasmic region). Interacts (via cytoplasmic region) with DST isoform 3 (via N-terminus). Isoform beta-4a interacts (via cytoplasmic domain) with DST (via N-terminus). Interacts with RAC1. ITGA6:ITGB4 is found in a ternary complex with NRG1 and ERBB3. ITGA6:ITGB4 is found in a ternary complex with IGF1 and IGF1R. ITGA6:ITGB4 interacts with IGF2. Interacts with TMEM268; this interaction prevents ITGB4 degradation. Post-translationally, palmitoylated by DHHC3 at several cysteines of the membrane-proximal region, enhancing stability and cell surface expression. Palmitoylation also promotes secondary association with tertaspanins. Integrin alpha-6/beta-4 is predominantly expressed by epithelia. Isoform beta-4D is also expressed in colon and placenta. Isoform beta-4E is also expressed in epidermis, lung, duodenum, heart, spleen and stomach.

The protein resides in the cell membrane. It is found in the cell junction. Its subcellular location is the hemidesmosome. In terms of biological role, integrin alpha-6/beta-4 is a receptor for laminin. Plays a critical structural role in the hemidesmosome of epithelial cells. Is required for the regulation of keratinocyte polarity and motility. ITGA6:ITGB4 binds to NRG1 (via EGF domain) and this binding is essential for NRG1-ERBB signaling. ITGA6:ITGB4 binds to IGF1 and this binding is essential for IGF1 signaling. ITGA6:ITGB4 binds to IGF2 and this binding is essential for IGF2 signaling. This chain is Integrin beta-4 (ITGB4), found in Homo sapiens (Human).